The primary structure comprises 319 residues: Pantothenate kinase (319 aa).

97–104 (GSVAVGKS) is a binding site for ATP.

The protein belongs to the prokaryotic pantothenate kinase family.

Its subcellular location is the cytoplasm. It carries out the reaction (R)-pantothenate + ATP = (R)-4'-phosphopantothenate + ADP + H(+). It functions in the pathway cofactor biosynthesis; coenzyme A biosynthesis; CoA from (R)-pantothenate: step 1/5. This is Pantothenate kinase from Mesorhizobium japonicum (strain LMG 29417 / CECT 9101 / MAFF 303099) (Mesorhizobium loti (strain MAFF 303099)).